Consider the following 477-residue polypeptide: 3-isopropylmalate dehydratase large subunit (477 aa).

Cys-352, Cys-413, and Cys-416 together coordinate [4Fe-4S] cluster.

This sequence belongs to the aconitase/IPM isomerase family. LeuC type 1 subfamily. As to quaternary structure, heterodimer of LeuC and LeuD. The cofactor is [4Fe-4S] cluster.

The catalysed reaction is (2R,3S)-3-isopropylmalate = (2S)-2-isopropylmalate. It participates in amino-acid biosynthesis; L-leucine biosynthesis; L-leucine from 3-methyl-2-oxobutanoate: step 2/4. Its function is as follows. Catalyzes the isomerization between 2-isopropylmalate and 3-isopropylmalate, via the formation of 2-isopropylmaleate. In Pseudomonas entomophila (strain L48), this protein is 3-isopropylmalate dehydratase large subunit.